We begin with the raw amino-acid sequence, 917 residues long: Interleukin-6 receptor subunit beta (917 aa).

The signal sequence occupies residues 1–22 (MSAPRIWLAQALLFFLTTESIG). Over 23–617 (QLLEPCGYIY…TPKFAQGEIE (595 aa)) the chain is Extracellular. The Ig-like C2-type domain occupies 26–120 (EPCGYIYPEF…IEQNVYGVTM (95 aa)). 2 cysteine pairs are disulfide-bonded: Cys28-Cys54 and Cys48-Cys103. N-linked (GlcNAc...) asparagine glycosylation is found at Asn43, Asn61, Asn83, and Asn131. 5 Fibronectin type-III domains span residues 128-221 (KPTN…VKPT), 222-322 (PPYN…TYED), 327-417 (PPSF…IPSP), 422-515 (AYSV…LKQA), and 517-611 (PARG…TPKF). A disulfide bridge connects residues Cys134 and Cys144. The N-linked (GlcNAc...) asparagine glycan is linked to Asn157. An intrachain disulfide couples Cys172 to Cys180. N-linked (GlcNAc...) asparagine glycosylation is present at Asn225. Positions 308–312 (WSDWS) match the WSXWS motif motif. Asn388 carries N-linked (GlcNAc...) asparagine glycosylation. Cys456 and Cys464 form a disulfide bridge. N-linked (GlcNAc...) asparagine glycans are attached at residues Asn476 and Asn551. The chain crosses the membrane as a helical span at residues 618-639 (AIVVPVCLAFLLTTLLGVLFCF). Topologically, residues 640–917 (NKRDLIKKHI…TVRQGGYMPQ (278 aa)) are cytoplasmic. The short motif at 649-657 (IWPNVPDPS) is the Box 1 motif element. Disordered stretches follow at residues 658–678 (KSHI…NSKD) and 719–754 (TEGH…TAST). Phosphoserine occurs at positions 659 and 665. The segment covering 729–753 (SSCMSSSRPSISSNEENESAQSTAS) has biased composition (low complexity). Phosphoserine is present on residues Ser780, Ser787, Ser827, and Ser837. The tract at residues 898-917 (EEIPKSYLPQTVRQGGYMPQ) is disordered.

Belongs to the type I cytokine receptor family. Type 2 subfamily. In terms of assembly, component of a hexamer of two molecules each of IL6, IL6R and IL6ST; associates with the complex IL6:IL6R but does not interact with IL6. Forms heterodimers composed of LIFR and IL6ST (type I OSM receptor) which are activated by LIF and OSM. Also forms heterodimers composed of OSMR and IL6ST (type II receptor) which are activated by OSM but not by LIF. Interacts with HCK. Interacts with INPP5D/SHIP1. Interacts with SRC and YES. Interacts with ARMH4; this interaction prevents IL6ST protein homodimerization and bridges ARMH4 with IL6R and STAT3 and therefore inhibits phosphorylation of STAT3 at 'Tyr-705'. In terms of processing, phosphorylation of Ser-780 down-regulates cell surface expression. Post-translationally, heavily N-glycosylated. Glycosylation is required for protein stability and localization in plasma membrane but not for ligand binding. Expression not restricted to IL6-responsive cells. Found in tissues such as brain, heart, thymus, spleen, kidney, lung and liver. Found in all the cell lines tested except BaF-B03. Expressed paraventricular nucleus of the hypothalamus.

It localises to the cell membrane. Signal-transducing molecule. The receptor systems for IL6, LIF, OSM, CNTF, IL11, CTF1 and BSF3 can utilize IL6ST for initiating signal transmission. Binding of IL6 to IL6R induces IL6ST homodimerization and formation of a high-affinity receptor complex, which activates the intracellular JAK-MAPK and JAK-STAT3 signaling pathways. That causes phosphorylation of IL6ST tyrosine residues which in turn activates STAT3. In parallel, the IL6 signaling pathway induces the expression of two cytokine receptor signaling inhibitors, SOCS1 and SOCS3, which inhibit JAK and terminate the activity of the IL6 signaling pathway as a negative feedback loop. Also activates the yes-associated protein 1 (YAP) and NOTCH pathways to control inflammation-induced epithelial regeneration, independently of STAT3. Mediates signals which regulate immune response, hematopoiesis, pain control and bone metabolism. Has a role in embryonic development. Essential for survival of motor and sensory neurons and for differentiation of astrocytes. Required for expression of TRPA1 in nociceptive neurons. Required for the maintenance of PTH1R expression in the osteoblast lineage and for the stimulation of PTH-induced osteoblast differentiation. Required for normal trabecular bone mass and cortical bone composition. The chain is Interleukin-6 receptor subunit beta from Mus musculus (Mouse).